A 154-amino-acid chain; its full sequence is Cytochrome c-type biogenesis protein CcmE (154 aa).

The Cytoplasmic portion of the chain corresponds to 1 to 7 (MKPRQKR). The helical; Signal-anchor for type II membrane protein transmembrane segment at 8-28 (LVLIVGIVAAVGVAAALVLNA) threads the bilayer. Over 29 to 154 (FQSNLVFFYS…GETVVKETRP (126 aa)) the chain is Periplasmic. Heme contacts are provided by His121 and Tyr125. The disordered stretch occupies residues 131–154 (AEALQRAGASNQKLGETVVKETRP).

It belongs to the CcmE/CycJ family.

It is found in the cell inner membrane. Functionally, heme chaperone required for the biogenesis of c-type cytochromes. Transiently binds heme delivered by CcmC and transfers the heme to apo-cytochromes in a process facilitated by CcmF and CcmH. This is Cytochrome c-type biogenesis protein CcmE from Methylibium petroleiphilum (strain ATCC BAA-1232 / LMG 22953 / PM1).